Consider the following 500-residue polypeptide: Probable malate:quinone oxidoreductase (500 aa).

Belongs to the MQO family. The cofactor is FAD.

It catalyses the reaction (S)-malate + a quinone = a quinol + oxaloacetate. Its pathway is carbohydrate metabolism; tricarboxylic acid cycle; oxaloacetate from (S)-malate (quinone route): step 1/1. This is Probable malate:quinone oxidoreductase from Corynebacterium aurimucosum (strain ATCC 700975 / DSM 44827 / CIP 107346 / CN-1) (Corynebacterium nigricans).